The sequence spans 185 residues: Ribosome-recycling factor (185 aa).

The disordered stretch occupies residues 138–160 (AMDKAVKDGEVGEDEGARGEKEL).

It belongs to the RRF family.

It localises to the cytoplasm. Responsible for the release of ribosomes from messenger RNA at the termination of protein biosynthesis. May increase the efficiency of translation by recycling ribosomes from one round of translation to another. This Micrococcus luteus (strain ATCC 4698 / DSM 20030 / JCM 1464 / CCM 169 / CCUG 5858 / IAM 1056 / NBRC 3333 / NCIMB 9278 / NCTC 2665 / VKM Ac-2230) (Micrococcus lysodeikticus) protein is Ribosome-recycling factor.